The following is a 147-amino-acid chain: NAD(P)H-quinone oxidoreductase subunit N (147 aa).

The protein belongs to the complex I NdhN subunit family. NDH-1 can be composed of about 15 different subunits; different subcomplexes with different compositions have been identified which probably have different functions.

It is found in the cellular thylakoid membrane. The enzyme catalyses a plastoquinone + NADH + (n+1) H(+)(in) = a plastoquinol + NAD(+) + n H(+)(out). It carries out the reaction a plastoquinone + NADPH + (n+1) H(+)(in) = a plastoquinol + NADP(+) + n H(+)(out). Functionally, NDH-1 shuttles electrons from an unknown electron donor, via FMN and iron-sulfur (Fe-S) centers, to quinones in the respiratory and/or the photosynthetic chain. The immediate electron acceptor for the enzyme in this species is believed to be plastoquinone. Couples the redox reaction to proton translocation, and thus conserves the redox energy in a proton gradient. Cyanobacterial NDH-1 also plays a role in inorganic carbon-concentration. The polypeptide is NAD(P)H-quinone oxidoreductase subunit N (Synechococcus sp. (strain JA-3-3Ab) (Cyanobacteria bacterium Yellowstone A-Prime)).